The primary structure comprises 289 residues: Nucleotide-binding protein Franean1_2060 (289 aa).

Residue 13–20 coordinates ATP; that stretch reads GLSGAGRS. 64–67 contacts GTP; sequence DVRG.

This sequence belongs to the RapZ-like family.

Its function is as follows. Displays ATPase and GTPase activities. The protein is Nucleotide-binding protein Franean1_2060 of Parafrankia sp. (strain EAN1pec).